The primary structure comprises 265 residues: Lysosomal membrane ascorbate-dependent ferrireductase CYB561A3 (265 aa).

Residues 1 to 2 are Cytoplasmic-facing; it reads MA. Residues 3 to 23 form a helical membrane-spanning segment; the sequence is VGWFYLSVLALCSLGSMCILF. Residues 12 to 219 form the Cytochrome b561 domain; sequence ALCSLGSMCI…FGLLVLYILL (208 aa). Residues 24–45 are Lumenal-facing; sequence TIYWMRYWHGGFAWDGSMLMFN. Residues 46–66 form a helical membrane-spanning segment; it reads WHPVLMVTGMVVLYSAASLVY. His47 and Arg67 together coordinate heme b. The Cytoplasmic segment spans residues 67–83; sequence RLPQSWVGPRLPWKSGH. L-ascorbate contacts are provided by Arg76 and Lys80. Heme b is bound at residue His83. Residues 84-104 traverse the membrane as a helical segment; the sequence is AAMHLLAFLLTVLGLHAVFEF. Over 105 to 119 the chain is Lumenal; sequence HNHAKIPHLYSLHSW. Heme b is bound by residues 112 to 115 and His117; that span reads HLYS. Residues 120–140 form a helical membrane-spanning segment; that stretch reads LGITTVFLFACQWFLGFSVFL. The Cytoplasmic portion of the chain corresponds to 141-154; that stretch reads LPWASMWLRSLLKP. Arg149 is an L-ascorbate binding site. The chain crosses the membrane as a helical span at residues 155–175; that stretch reads IHVFFGASILSLAIASVVSGI. Heme b contacts are provided by His156 and Glu177. Residues 176–197 lie on the Lumenal side of the membrane; the sequence is NEKLFFSLKNGTKTYSNLPSEA. N-linked (GlcNAc...) asparagine glycosylation is present at Asn185. The chain crosses the membrane as a helical span at residues 198–218; that stretch reads VFANCAGMLVVVFGLLVLYIL. Over 219–265 the chain is Cytoplasmic; sequence LASSWKRPEPGMQAEREPTRTRGRAGTPEVMLEGERGLAEPLLQKRS. Lys224 contacts heme b. Over residues 228–238 the composition is skewed to basic and acidic residues; it reads PGMQAEREPTR. The disordered stretch occupies residues 228-265; the sequence is PGMQAEREPTRTRGRAGTPEVMLEGERGLAEPLLQKRS.

As to quaternary structure, homodimer. Requires heme b as cofactor. In terms of processing, N-glycosylated.

Its subcellular location is the late endosome membrane. It localises to the lysosome membrane. It catalyses the reaction Fe(3+)(out) + L-ascorbate(in) = monodehydro-L-ascorbate radical(in) + Fe(2+)(out) + H(+). Functionally, transmembrane reductase that uses ascorbate as an electron donor in the cytoplasm and transfers electrons across membranes to reduce iron cations Fe(3+) into Fe(2+) in the lumen of the late endosome and lysosome. Reduced iron can then be extruded from the late endosome and lysosome to the cytoplasm by divalent metal-specific transporters. It is therefore most probably involved in endosomal and lysosomal cellular iron homeostasis. The protein is Lysosomal membrane ascorbate-dependent ferrireductase CYB561A3 of Bos taurus (Bovine).